Here is an 869-residue protein sequence, read N- to C-terminus: AP-3 complex subunit delta (869 aa).

S2 carries the post-translational modification N-acetylserine. HEAT repeat units follow at residues N33–V70, S107–D142, L143–D179, A180–Q216, C218–R254, A292–W329, and A330–V366. The tract at residues I738–L869 is disordered. Residues I769–A780 show a composition bias toward polar residues. The segment covering Q815–E830 has biased composition (basic and acidic residues). Positions K831–R850 are enriched in basic residues.

Belongs to the adaptor complexes large subunit family. As to quaternary structure, adaptor protein complex 3 (AP-3) is a heterotetramer composed of two large adaptins (delta-type subunit and beta-type subunit), a medium adaptin (mu-type subunit) and a small adaptin (sigma-type subunit). Binds to EPSIN2.

It localises to the cytoplasm. The protein localises to the golgi apparatus membrane. Part of the AP-3 complex, an adaptor-related complex which seems to be clathrin-associated. The complex is associated with the Golgi region as well as more peripheral structures. It facilitates the budding of vesicles from the Golgi membrane and may be directly involved in trafficking to the vacuole. It also function in maintaining the identity of lytic vacuoles and in regulating the transition between storage and lytic vacuoles. This is AP-3 complex subunit delta (DELTA-ADR) from Arabidopsis thaliana (Mouse-ear cress).